A 433-amino-acid polypeptide reads, in one-letter code: UDP-N-acetylglucosamine 1-carboxyvinyltransferase (433 aa).

Position 34 to 35 (34 to 35 (KN)) interacts with phosphoenolpyruvate. R104 contributes to the UDP-N-acetyl-alpha-D-glucosamine binding site. The Proton donor role is filled by C128. C128 bears the 2-(S-cysteinyl)pyruvic acid O-phosphothioketal mark. Residues D320 and I342 each coordinate UDP-N-acetyl-alpha-D-glucosamine.

The protein belongs to the EPSP synthase family. MurA subfamily.

Its subcellular location is the cytoplasm. It catalyses the reaction phosphoenolpyruvate + UDP-N-acetyl-alpha-D-glucosamine = UDP-N-acetyl-3-O-(1-carboxyvinyl)-alpha-D-glucosamine + phosphate. The protein operates within cell wall biogenesis; peptidoglycan biosynthesis. Cell wall formation. Adds enolpyruvyl to UDP-N-acetylglucosamine. The protein is UDP-N-acetylglucosamine 1-carboxyvinyltransferase of Parasynechococcus marenigrum (strain WH8102).